The following is a 450-amino-acid chain: Homogentisate 1,2-dioxygenase (450 aa).

His304 acts as the Proton acceptor in catalysis. Fe cation-binding residues include His347 and Glu353. Homogentisate contacts are provided by Tyr362 and His383. His383 lines the Fe cation pocket.

The protein belongs to the homogentisate dioxygenase family. In terms of assembly, hexamer; dimer of trimers. The cofactor is Fe cation.

The catalysed reaction is homogentisate + O2 = 4-maleylacetoacetate + H(+). Its pathway is amino-acid degradation; L-phenylalanine degradation; acetoacetate and fumarate from L-phenylalanine: step 4/6. Involved in the catabolism of homogentisate (2,5-dihydroxyphenylacetate or 2,5-OH-PhAc), a central intermediate in the degradation of phenylalanine and tyrosine. Catalyzes the oxidative ring cleavage of the aromatic ring of homogentisate to yield maleylacetoacetate. This chain is Homogentisate 1,2-dioxygenase, found in Burkholderia thailandensis (strain ATCC 700388 / DSM 13276 / CCUG 48851 / CIP 106301 / E264).